A 261-amino-acid polypeptide reads, in one-letter code: 22 kDa alpha-zein 8b (261 aa).

An N-terminal signal peptide occupies residues 1 to 16 (LALLALLALFVSATNA).

It belongs to the zein family.

Functionally, zeins are major seed storage proteins. This is 22 kDa alpha-zein 8b from Zea mays (Maize).